Reading from the N-terminus, the 586-residue chain is Transmembrane protease serine 13 (586 aa).

2 disordered regions span residues M1 to S115 and P131 to F157. At M1–Q165 the chain is on the cytoplasmic side. The 1-1 repeat unit spans residues A9–R13. A 13 X 5 AA repeats of A-S-P-A-[GLQR] region spans residues A9 to L93. The stretch at T14–G18 is one 2-1; approximate repeat. A compositionally biased stretch (low complexity) spans T14 to G52. A 4 X 5 AA repeats of T-P-P-G-R region spans residues T14 to R68. 10 consecutive repeat copies span residues A19 to Q23, A24 to G28, T29 to R33, A34 to Q38, A39 to Q43, A44 to G48, T49 to R53, A54 to Q58, A59 to G63, and T64 to R68. The 1-9; approximate repeat unit spans residues A69–Q78. Composition is skewed to low complexity over residues A69–S111 and R133–R144. A run of 3 repeats spans residues A79–Q83, A84–R88, and A89–L93. Residues L166–F186 traverse the membrane as a helical; Signal-anchor for type II membrane protein segment. The Extracellular portion of the chain corresponds to Q187–L586. One can recognise an SRCR domain in the interval I195–R325. The 23-residue stretch at C204–C226 folds into the LDL-receptor class A domain. Disulfide bonds link C250–C314, C263–C317, and C351–C367. N-linked (GlcNAc...) asparagine glycosylation is found at N255 and N292. Residues I326–E559 form the Peptidase S1 domain. The active-site Charge relay system is the H366. Residue N405 is glycosylated (N-linked (GlcNAc...) asparagine). D414 serves as the catalytic Charge relay system. A glycan (N-linked (GlcNAc...) asparagine) is linked at N445. 3 disulfide bridges follow: C448-C517, C480-C496, and C507-C535. The active-site Charge relay system is the S511. Polar residues predominate over residues Q565–T574. The tract at residues Q565–L586 is disordered. Residues S575–L586 are compositionally biased toward gly residues.

This sequence belongs to the peptidase S1 family. As to quaternary structure, interacts with SPINT1/HAI-1; the interaction promotes the phosphorylation and cell membrane localization of TMPRSS13. Interacts with SPINT2/HAI-2; the interaction promotes the phosphorylation and cell membrane localization of TMPRSS13. Post-translationally, the inactive zymogen is post-translationally modified and then trafficked to the cell surface, whereby it undergoes autocatalytic cleavage resulting in an activated form that is released extracellularly. Phosphorylation is required for localization at the cell surface. Phosphorylation increases following inhibition of protease activity by SPINT2/HAI-2. In terms of processing, N-glycosylation of Asn-405 and Asn-445 is required for exit from the endoplasmic reticulum and trafficking to the cell surface. Also required for autocleavage of the zymogen, activation and secretion of the mature protein. In terms of tissue distribution, expressed in placenta. As to expression, predominantly expressed in lung, placenta, pancreas, and prostate. Expressed in lung, placenta, pancreas, and prostate. Weakly expressed in testis and peripheral blood lymphocytes.

The protein resides in the cell membrane. It localises to the secreted. It is found in the cytoplasm. Its activity is regulated as follows. Cleavage of HGF is inhibited by SPINT1/HAI-1 via the BPTI/Kunitz inhibitor 1 domain. Serine protease. Cleaves the proform of PRSS8/prostasin to form the active protein. Cleaves the proform of HGF to form the active protein which promotes MAPK signaling. Promotes the formation of the stratum corneum and subsequently the epidermal barrier in embryos. This is Transmembrane protease serine 13 (TMPRSS13) from Homo sapiens (Human).